Here is a 407-residue protein sequence, read N- to C-terminus: 1-deoxy-D-xylulose 5-phosphate reductoisomerase (407 aa).

Residues Thr25, Gly26, Ser27, Ile28, Asn53, and Asn136 each contribute to the NADPH site. Lys137 is a binding site for 1-deoxy-D-xylulose 5-phosphate. NADPH is bound at residue Glu138. Residue Asp162 participates in Mn(2+) binding. Residues Ser163, Glu164, Ser188, and His211 each coordinate 1-deoxy-D-xylulose 5-phosphate. Residue Glu164 participates in Mn(2+) binding. Gly217 serves as a coordination point for NADPH. Positions 224, 229, 230, and 233 each coordinate 1-deoxy-D-xylulose 5-phosphate. Mn(2+) is bound at residue Glu233.

This sequence belongs to the DXR family. It depends on Mg(2+) as a cofactor. Mn(2+) serves as cofactor.

It carries out the reaction 2-C-methyl-D-erythritol 4-phosphate + NADP(+) = 1-deoxy-D-xylulose 5-phosphate + NADPH + H(+). The protein operates within isoprenoid biosynthesis; isopentenyl diphosphate biosynthesis via DXP pathway; isopentenyl diphosphate from 1-deoxy-D-xylulose 5-phosphate: step 1/6. Functionally, catalyzes the NADPH-dependent rearrangement and reduction of 1-deoxy-D-xylulose-5-phosphate (DXP) to 2-C-methyl-D-erythritol 4-phosphate (MEP). The sequence is that of 1-deoxy-D-xylulose 5-phosphate reductoisomerase from Bradyrhizobium diazoefficiens (strain JCM 10833 / BCRC 13528 / IAM 13628 / NBRC 14792 / USDA 110).